A 302-amino-acid chain; its full sequence is MFSRLSRSHSKALPIALGTVAIAAATAFYFANRNQHSFVFNESNKVFKGDDKWIDLPISKIEEESHDTRRFTFKLPTEDSEMGLVLASALFAKFVTPKGSNVVRPYTPVSDLSQKGHFQLVVKHYEGGKMTSHLFGLKPNDTVSFKGPIMKWKWQPNQFKSITLLGAGTGINPLYQLAHHIVENPNDKTKVNLLYGNKTPQDILLRKELDALKEKYPDKFNVTYFVDDKQDDQDFDGEIGFISKDFIQEHVPGPKESTHLFVCGPPPFMNAYSGEKKSPKDQGELIGILNNLGYSKDQVFKF.

Residues 1–41 (MFSRLSRSHSKALPIALGTVAIAAATAFYFANRNQHSFVFN) constitute a propeptide, removed in mature form. A helical transmembrane segment spans residues 12 to 32 (ALPIALGTVAIAAATAFYFAN). In terms of domain architecture, FAD-binding FR-type spans 51 to 155 (DKWIDLPISK…KGPIMKWKWQ (105 aa)). 158 to 193 (QFKSITLLGAGTGINPLYQLAHHIVENPNDKTKVNL) contributes to the FAD binding site. Residue Ser-278 is modified to Phosphoserine.

This sequence belongs to the flavoprotein pyridine nucleotide cytochrome reductase family. FAD serves as cofactor. Post-translationally, there are two isoforms of NADH-cytochrome b5 reductase, a 34 kDa form (p34) and a 32 kDa form (p32). The p34 form becomes firmly anchored to the outer mitochondrial membrane after an incomplete translocation arrest. The p32 form is formed after translocation of the p34 precursor to the inner mitochondrial membrane, where it is processed by mitochondrial inner membrane peptidase (IMP) complex and released to the intermembrane space.

The protein localises to the mitochondrion intermembrane space. The protein resides in the mitochondrion outer membrane. It catalyses the reaction 2 Fe(III)-[cytochrome b5] + NADH = 2 Fe(II)-[cytochrome b5] + NAD(+) + H(+). Functionally, the outer membrane form may mediate the reduction of outer membrane cytochrome b5, and the soluble inter-membrane space form may transfer electrons from external NADH to cytochrome c, thereby mediating an antimycin-insensitive, energy-coupled oxidation of external NADH by yeast mitochondria. Involved in the reduction of D-erythroascorbyl free radicals. This chain is NADH-cytochrome b5 reductase 2 (MCR1), found in Saccharomyces cerevisiae (strain YJM789) (Baker's yeast).